We begin with the raw amino-acid sequence, 318 residues long: Magnetosome protein MamM (318 aa).

The transmembrane domain (TMD) stretch occupies residues 1-210; it reads MRKSGCAVCS…FMDAYRGLMD (210 aa). 4 helical membrane passes run 13–33, 39–59, 81–101, and 117–137; these read IGWV…FVGL, AMLA…MVII, FILS…LLVH, and LIVL…YFYS. Residues 211–318 are C-terminal domain (CTD); sequence HTAGEAVQNR…DEVMLSKVDN (108 aa). Fe cation contacts are provided by Asp249, His264, His285, and Glu289.

Belongs to the cation diffusion facilitator (CDF) transporter (TC 2.A.4) family. As to quaternary structure, forms homodimers via its C-terminal domain (CTD) in the presence of metal cations. Interacts with MamB via their CTD. Isolated CTD forms homodimers.

Its subcellular location is the magnetosome membrane. It is found in the cell inner membrane. Functionally, essential for magnetosome formation; required for stable accumulation of MamB. May nucleate iron crystal formation. Probably binds and transports iron. Binds divalent cations, possibly up to 3 Zn(2+) per dimer in vitro, probably iron in vivo. One of 7 genes (mamLQBIEMO) able to induce magnetosome membrane biogenesis; coexpression of mamLQRBIEMO in a deletion of the 17 gene mamAB operon restores magnetosome vesicle formation but not magnetite biosynthesis. The chain is Magnetosome protein MamM from Magnetospirillum gryphiswaldense (strain DSM 6361 / JCM 21280 / NBRC 15271 / MSR-1).